Consider the following 88-residue polypeptide: Small ribosomal subunit protein uS17 (88 aa).

It belongs to the universal ribosomal protein uS17 family. In terms of assembly, part of the 30S ribosomal subunit.

Functionally, one of the primary rRNA binding proteins, it binds specifically to the 5'-end of 16S ribosomal RNA. The protein is Small ribosomal subunit protein uS17 of Maridesulfovibrio salexigens (strain ATCC 14822 / DSM 2638 / NCIMB 8403 / VKM B-1763) (Desulfovibrio salexigens).